The sequence spans 159 residues: Small heat shock protein hspM (159 aa).

Positions Met-1–Asn-159 constitute a sHSP domain. Residues Met-35–Asn-101 form a disordered region. 2 stretches are compositionally biased toward low complexity: residues Asn-36–Asn-46 and Ser-61–Asn-95.

Belongs to the small heat shock protein (HSP20) family.

This is Small heat shock protein hspM (hspM) from Dictyostelium discoideum (Social amoeba).